Reading from the N-terminus, the 439-residue chain is Phenylacetate-coenzyme A ligase (439 aa).

Belongs to the phenylacetyl-CoA ligase family. As to quaternary structure, monomer.

The enzyme catalyses 2-phenylacetate + ATP + CoA = phenylacetyl-CoA + AMP + diphosphate. The protein operates within aromatic compound metabolism; phenylacetate degradation. Its activity is regulated as follows. Inhibited by divalent cations (zinc, copper, mercury) and by the sulfhydryl reagents 5,5-dithiobis(2-nitrobenzoic acid), N-ethylmaleimide and p-chloromercuribenzoate. In terms of biological role, catalyzes the activation of phenylacetic acid (PA) to phenylacetyl-CoA (PA-CoA). Involved in the phenylalanine metabolism. Can also use CTP and UTP as substrate. The protein is Phenylacetate-coenzyme A ligase (paaK) of Pseudomonas putida (Arthrobacter siderocapsulatus).